Here is a 190-residue protein sequence, read N- to C-terminus: Segregation and condensation protein B (190 aa).

Belongs to the ScpB family. As to quaternary structure, homodimer. Homodimerization may be required to stabilize the binding of ScpA to the Smc head domains. Component of a cohesin-like complex composed of ScpA, ScpB and the Smc homodimer, in which ScpA and ScpB bind to the head domain of Smc. The presence of the three proteins is required for the association of the complex with DNA.

The protein resides in the cytoplasm. In terms of biological role, participates in chromosomal partition during cell division. May act via the formation of a condensin-like complex containing Smc and ScpA that pull DNA away from mid-cell into both cell halves. The polypeptide is Segregation and condensation protein B (Alkaliphilus metalliredigens (strain QYMF)).